A 172-amino-acid chain; its full sequence is Photosystem I assembly protein Ycf3 (172 aa).

3 TPR repeats span residues 35-70 (AFTY…EIDP), 74-107 (SYIL…NPFL), and 122-155 (GEQA…TPGN).

This sequence belongs to the Ycf3 family.

The protein resides in the plastid. It localises to the chloroplast thylakoid membrane. Functionally, essential for the assembly of the photosystem I (PSI) complex. May act as a chaperone-like factor to guide the assembly of the PSI subunits. This Sorghum bicolor (Sorghum) protein is Photosystem I assembly protein Ycf3.